The sequence spans 215 residues: Fibrillarin-like rRNA/tRNA 2'-O-methyltransferase (215 aa).

The interval 1-29 (MKASSSLPDGVQRRQFDNRSRLTTHGTTV) is disordered. The segment covering 11 to 20 (VQRRQFDNRS) has biased composition (basic and acidic residues). Residues 76–77 (TT), 92–93 (EF), 117–118 (DA), and 138–141 (DVAT) contribute to the S-adenosyl-L-methionine site.

Belongs to the methyltransferase superfamily. Fibrillarin family. Interacts with nop5. Component of box C/D small ribonucleoprotein (sRNP) particles that contain rpl7ae, FlpA and nop5, plus a guide RNA.

Involved in pre-rRNA and tRNA processing. Utilizes the methyl donor S-adenosyl-L-methionine to catalyze the site-specific 2'-hydroxyl methylation of ribose moieties in rRNA and tRNA. Site specificity is provided by a guide RNA that base pairs with the substrate. Methylation occurs at a characteristic distance from the sequence involved in base pairing with the guide RNA. This Haloquadratum walsbyi (strain DSM 16790 / HBSQ001) protein is Fibrillarin-like rRNA/tRNA 2'-O-methyltransferase.